The primary structure comprises 561 residues: Mercuric reductase (561 aa).

Positions 1–65 (MTTLKITGMT…AVAGLGYEAT (65 aa)) constitute an HMA domain. A metal cation is bound by residues cysteine 11 and cysteine 14. FAD is bound by residues alanine 110, glycine 130, and threonine 135. Cysteines 136 and 141 form a disulfide. The FAD site is built by lysine 145, alanine 211, aspartate 403, and valine 411. Residues cysteine 558 and cysteine 559 each coordinate Hg(2+).

Belongs to the class-I pyridine nucleotide-disulfide oxidoreductase family. In terms of assembly, homodimer. The cofactor is FAD.

The enzyme catalyses Hg + NADP(+) + H(+) = Hg(2+) + NADPH. In terms of biological role, resistance to Hg(2+) in bacteria appears to be governed by a specialized system which includes mercuric reductase. MerA protein is responsible for volatilizing mercury as Hg(0). The sequence is that of Mercuric reductase (merA) from Acinetobacter calcoaceticus.